A 290-amino-acid polypeptide reads, in one-letter code: 4-hydroxybenzoate octaprenyltransferase (290 aa).

Helical transmembrane passes span Ile21–Met41, Leu44–Ile64, Leu97–Val117, Phe143–Val163, Trp168–Val188, Glu211–Gly231, Leu235–Ile255, and Asn270–Leu290.

The protein belongs to the UbiA prenyltransferase family. Mg(2+) serves as cofactor.

The protein localises to the cell inner membrane. The enzyme catalyses all-trans-octaprenyl diphosphate + 4-hydroxybenzoate = 4-hydroxy-3-(all-trans-octaprenyl)benzoate + diphosphate. Its pathway is cofactor biosynthesis; ubiquinone biosynthesis. Its function is as follows. Catalyzes the prenylation of para-hydroxybenzoate (PHB) with an all-trans polyprenyl group. Mediates the second step in the final reaction sequence of ubiquinone-8 (UQ-8) biosynthesis, which is the condensation of the polyisoprenoid side chain with PHB, generating the first membrane-bound Q intermediate 3-octaprenyl-4-hydroxybenzoate. The polypeptide is 4-hydroxybenzoate octaprenyltransferase (Shewanella amazonensis (strain ATCC BAA-1098 / SB2B)).